Reading from the N-terminus, the 777-residue chain is MFKRTGSLLLRCRASRVPVIGRPLISLSTSSTSLSLSRPRSFATTSLRRYTEASSSTTQTSPSSSSWPAPDAAPRVPQTLTEKIVQAYSLGLAEGQYVKAGDYVMLSPHRCMTHDNSWPTALKFMAIGASKVHNPDQIVMTLDHDVQNKSEKNLKKYESIEKFAKQHGIDFYPAGHGVGHQIMIEEGYAFPGTVTVASDSHSNMYGGVGCLGTPMVRTDAATIWATGRTWWKVPPIAKVQFTGTLPEGVTGKDVIVALSGLFNKDEVLNYAIEFTGSEETMKSLSVDTRLTIANMTTEWGALTGLFPIDSTLEQWLRHKAATASRTETARRFAEERINELFANPTVADRGARYAKYLYLDLSTLSPYVSGPNSVKVATPLDELEKHKLKIDKAYLVSCTNSRASDIAAAAKVFKDAVARTGGPVRVADGVEFYVAAASKAEQKIAEEAGDWQALMDAGAIPLPAGCAVCIGLGAGLLKEGEVGISASNRNFKGRMGSPDAKAYLASPEVVAASALNGVISGPGIYKRPEDWTGVSIGEGEVVESGSRIDTTLEAMEKFIGQLDSMIDSSSKAVMPEESTGSGATEVDIVPGFPEKIEGEILFLDADNISTDGIYPGKYTYQDDVTKDKMAQVCMENYDPAFSGIARAGDIFVSGFNFGCGSSREQAATSILAKQLPLVVAGSIGNTFSRNAVNNALPLLEMPRLIERLREAFGSEKQPTRRTGWTFTWNVRTSQVTVQEGPGGETWSQSVPAFPPNLQDIIAQGGLEKWVKKEISKA.

A mitochondrion-targeting transit peptide spans 1 to 35; it reads MFKRTGSLLLRCRASRVPVIGRPLISLSTSSTSLS. The tract at residues 47–74 is disordered; it reads LRRYTEASSSTTQTSPSSSSWPAPDAAP. A compositionally biased stretch (low complexity) spans 52-74; the sequence is EASSSTTQTSPSSSSWPAPDAAP. [4Fe-4S] cluster contacts are provided by cysteine 398, cysteine 466, and cysteine 469.

It belongs to the aconitase/IPM isomerase family. [4Fe-4S] cluster is required as a cofactor.

It localises to the mitochondrion. It catalyses the reaction (2R,3S)-homoisocitrate = cis-homoaconitate + H2O. It functions in the pathway amino-acid biosynthesis; L-lysine biosynthesis via AAA pathway; L-alpha-aminoadipate from 2-oxoglutarate: step 3/5. Catalyzes the reversible hydration of cis-homoaconitate to (2R,3S)-homoisocitrate, a step in the alpha-aminoadipate pathway for lysine biosynthesis. This is Homoaconitase, mitochondrial (lys4) from Aspergillus fumigatus (strain ATCC MYA-4609 / CBS 101355 / FGSC A1100 / Af293) (Neosartorya fumigata).